Here is a 492-residue protein sequence, read N- to C-terminus: Aspartyl/glutamyl-tRNA(Asn/Gln) amidotransferase subunit B (492 aa).

This sequence belongs to the GatB/GatE family. GatB subfamily. In terms of assembly, heterotrimer of A, B and C subunits.

It catalyses the reaction L-glutamyl-tRNA(Gln) + L-glutamine + ATP + H2O = L-glutaminyl-tRNA(Gln) + L-glutamate + ADP + phosphate + H(+). The enzyme catalyses L-aspartyl-tRNA(Asn) + L-glutamine + ATP + H2O = L-asparaginyl-tRNA(Asn) + L-glutamate + ADP + phosphate + 2 H(+). Allows the formation of correctly charged Asn-tRNA(Asn) or Gln-tRNA(Gln) through the transamidation of misacylated Asp-tRNA(Asn) or Glu-tRNA(Gln) in organisms which lack either or both of asparaginyl-tRNA or glutaminyl-tRNA synthetases. The reaction takes place in the presence of glutamine and ATP through an activated phospho-Asp-tRNA(Asn) or phospho-Glu-tRNA(Gln). This Azorhizobium caulinodans (strain ATCC 43989 / DSM 5975 / JCM 20966 / LMG 6465 / NBRC 14845 / NCIMB 13405 / ORS 571) protein is Aspartyl/glutamyl-tRNA(Asn/Gln) amidotransferase subunit B.